The sequence spans 863 residues: FO synthase (863 aa).

2 consecutive Radical SAM core domains span residues 91–343 and 551–792; these read ITYS…APPN and VTFV…SHIQ. Residues 92–424 are cofG-like; sequence TYSRKVFIPV…PRVRGHVVAL (333 aa). The [4Fe-4S] cluster site is built by Cys105, Cys109, Cys112, Cys565, Cys569, and Cys572. The tract at residues 528-861 is cofH-like; that stretch reads DGPALEAVTA…RQRTTTYALR (334 aa).

It in the N-terminal section; belongs to the radical SAM superfamily. CofG family. In the C-terminal section; belongs to the radical SAM superfamily. CofH family. Requires [4Fe-4S] cluster as cofactor.

It catalyses the reaction 5-amino-6-(D-ribitylamino)uracil + L-tyrosine + S-adenosyl-L-methionine = 5-amino-5-(4-hydroxybenzyl)-6-(D-ribitylimino)-5,6-dihydrouracil + 2-iminoacetate + 5'-deoxyadenosine + L-methionine + H(+). The enzyme catalyses 5-amino-5-(4-hydroxybenzyl)-6-(D-ribitylimino)-5,6-dihydrouracil + S-adenosyl-L-methionine = 7,8-didemethyl-8-hydroxy-5-deazariboflavin + 5'-deoxyadenosine + L-methionine + NH4(+) + H(+). Its pathway is cofactor biosynthesis; coenzyme F0 biosynthesis. Its function is as follows. Catalyzes the radical-mediated synthesis of 7,8-didemethyl-8-hydroxy-5-deazariboflavin (FO) from 5-amino-6-(D-ribitylamino)uracil and L-tyrosine. This is FO synthase (fbiC) from Mycobacterium leprae (strain TN).